We begin with the raw amino-acid sequence, 25 residues long: Caerin-1.18 (25 aa).

Leucine 25 carries the leucine amide modification.

As to expression, expressed by the skin dorsal glands.

The protein localises to the secreted. Shows significant activity against Gram-positive organisms, but is less effective against Gram-negative organisms. The protein is Caerin-1.18 of Ranoidea gracilenta (Dainty green tree frog).